The sequence spans 277 residues: Phosphonates import ATP-binding protein PhnC 2 (277 aa).

Residues 3 to 251 form the ABC transporter domain; sequence ISLNGISVQH…LLQALYAQHL (249 aa). ATP is bound at residue 40 to 47; it reads GPSGAGKT.

This sequence belongs to the ABC transporter superfamily. Phosphonates importer (TC 3.A.1.9.1) family. The complex is composed of two ATP-binding proteins (PhnC), two transmembrane proteins (PhnE) and a solute-binding protein (PhnD).

It is found in the cell inner membrane. The catalysed reaction is phosphonate(out) + ATP + H2O = phosphonate(in) + ADP + phosphate + H(+). In terms of biological role, part of the ABC transporter complex PhnCDE involved in phosphonates import. Responsible for energy coupling to the transport system. This Albidiferax ferrireducens (strain ATCC BAA-621 / DSM 15236 / T118) (Rhodoferax ferrireducens) protein is Phosphonates import ATP-binding protein PhnC 2.